Consider the following 388-residue polypeptide: Succinate--CoA ligase [ADP-forming] subunit beta (388 aa).

One can recognise an ATP-grasp domain in the interval 9 to 244; the sequence is KQLFAEYGLP…PSQDDAREAH (236 aa). Residues K46, 53–55, E99, T102, and E107 each bind ATP; that span reads GRG. Residues N199 and D213 each coordinate Mg(2+). Substrate is bound by residues N264 and 321-323; that span reads GIV.

Belongs to the succinate/malate CoA ligase beta subunit family. In terms of assembly, heterotetramer of two alpha and two beta subunits. The cofactor is Mg(2+).

The enzyme catalyses succinate + ATP + CoA = succinyl-CoA + ADP + phosphate. It carries out the reaction GTP + succinate + CoA = succinyl-CoA + GDP + phosphate. The protein operates within carbohydrate metabolism; tricarboxylic acid cycle; succinate from succinyl-CoA (ligase route): step 1/1. Succinyl-CoA synthetase functions in the citric acid cycle (TCA), coupling the hydrolysis of succinyl-CoA to the synthesis of either ATP or GTP and thus represents the only step of substrate-level phosphorylation in the TCA. The beta subunit provides nucleotide specificity of the enzyme and binds the substrate succinate, while the binding sites for coenzyme A and phosphate are found in the alpha subunit. The chain is Succinate--CoA ligase [ADP-forming] subunit beta from Pseudomonas putida (strain ATCC 700007 / DSM 6899 / JCM 31910 / BCRC 17059 / LMG 24140 / F1).